The primary structure comprises 302 residues: MDLSGCGTALITPFRADESIDEPALRALVDWQIASGIDWLVACGTTAETPTLTHDEWLRVIRIIAEQAAGRVPVWAGCTHNATRQAVENARQAAQIPGVTAILVANPYYNKPTQQGLYEHFLAVARAVELPVVLYNIPSRTGCNLEPETVLRLVGAAPNIAAIKESSSNLPQIGELLTRAPESFRVYSGDDNMALGTIALGGAGLVSVASNEIPREMAEMVRAAVQNDWALARQLHRKYFPLLQANFLETSPGPVKAVLAMMGRIEERYRLPMTPVSSATRARLERLAGELGLLVETPVPQR.

Residue threonine 46 participates in pyruvate binding. Tyrosine 135 functions as the Proton donor/acceptor in the catalytic mechanism. Catalysis depends on lysine 164, which acts as the Schiff-base intermediate with substrate. Pyruvate is bound at residue valine 206.

It belongs to the DapA family. Homotetramer; dimer of dimers.

The protein resides in the cytoplasm. It carries out the reaction L-aspartate 4-semialdehyde + pyruvate = (2S,4S)-4-hydroxy-2,3,4,5-tetrahydrodipicolinate + H2O + H(+). It participates in amino-acid biosynthesis; L-lysine biosynthesis via DAP pathway; (S)-tetrahydrodipicolinate from L-aspartate: step 3/4. Its function is as follows. Catalyzes the condensation of (S)-aspartate-beta-semialdehyde [(S)-ASA] and pyruvate to 4-hydroxy-tetrahydrodipicolinate (HTPA). The polypeptide is 4-hydroxy-tetrahydrodipicolinate synthase (Acidobacterium capsulatum (strain ATCC 51196 / DSM 11244 / BCRC 80197 / JCM 7670 / NBRC 15755 / NCIMB 13165 / 161)).